The chain runs to 338 residues: Ferrochelatase (338 aa).

Fe cation is bound by residues His-189 and Glu-294.

Belongs to the ferrochelatase family.

It localises to the cytoplasm. It carries out the reaction heme b + 2 H(+) = protoporphyrin IX + Fe(2+). It functions in the pathway porphyrin-containing compound metabolism; protoheme biosynthesis; protoheme from protoporphyrin-IX: step 1/1. Its function is as follows. Catalyzes the ferrous insertion into protoporphyrin IX. This is Ferrochelatase from Pseudomonas putida (strain ATCC 700007 / DSM 6899 / JCM 31910 / BCRC 17059 / LMG 24140 / F1).